The chain runs to 200 residues: Probable nicotinate-nucleotide adenylyltransferase (200 aa).

It belongs to the NadD family.

It catalyses the reaction nicotinate beta-D-ribonucleotide + ATP + H(+) = deamido-NAD(+) + diphosphate. The protein operates within cofactor biosynthesis; NAD(+) biosynthesis; deamido-NAD(+) from nicotinate D-ribonucleotide: step 1/1. Functionally, catalyzes the reversible adenylation of nicotinate mononucleotide (NaMN) to nicotinic acid adenine dinucleotide (NaAD). This is Probable nicotinate-nucleotide adenylyltransferase from Leifsonia xyli subsp. xyli (strain CTCB07).